A 196-amino-acid chain; its full sequence is UPF0301 protein BF2109 (196 aa).

Belongs to the UPF0301 (AlgH) family.

The sequence is that of UPF0301 protein BF2109 from Bacteroides fragilis (strain ATCC 25285 / DSM 2151 / CCUG 4856 / JCM 11019 / LMG 10263 / NCTC 9343 / Onslow / VPI 2553 / EN-2).